A 319-amino-acid chain; its full sequence is Acetyl esterase (319 aa).

Positions 91–93 (HGG) match the Involved in the stabilization of the negatively charged intermediate by the formation of the oxyanion hole motif. Residues Ser-165, Asp-262, and His-292 contribute to the active site.

It belongs to the 'GDXG' lipolytic enzyme family. As to quaternary structure, homodimer. Interacts with MalT and MelA.

The protein resides in the cytoplasm. Functionally, displays esterase activity towards short chain fatty esters (acyl chain length of up to 8 carbons). Able to hydrolyze triacetylglycerol (triacetin) and tributyrylglycerol (tributyrin), but not trioleylglycerol (triolein) or cholesterol oleate. Negatively regulates MalT activity by antagonizing maltotriose binding. Inhibits MelA galactosidase activity. The chain is Acetyl esterase from Escherichia coli O139:H28 (strain E24377A / ETEC).